A 146-amino-acid polypeptide reads, in one-letter code: Hemoglobin subunit beta (146 aa).

V1 carries the post-translational modification N-acetylvaline. In terms of domain architecture, Globin spans 2–146 (HLTGEEKSAV…VANALAHKYH (145 aa)). T12 bears the Phosphothreonine mark. S44 is subject to Phosphoserine. The residue at position 59 (K59) is an N6-acetyllysine. H63 provides a ligand contact to heme b. K82 carries the N6-acetyllysine modification. Residue H92 coordinates heme b. C93 bears the S-nitrosocysteine mark. K144 carries the N6-acetyllysine modification.

It belongs to the globin family. In terms of assembly, heterotetramer of two alpha chains and two beta chains. In terms of tissue distribution, red blood cells.

In terms of biological role, involved in oxygen transport from the lung to the various peripheral tissues. The chain is Hemoglobin subunit beta (HBB) from Saguinus oedipus (Cotton-top tamarin).